We begin with the raw amino-acid sequence, 442 residues long: Histidine--tRNA ligase (442 aa).

The protein belongs to the class-II aminoacyl-tRNA synthetase family. In terms of assembly, homodimer.

The protein localises to the cytoplasm. It carries out the reaction tRNA(His) + L-histidine + ATP = L-histidyl-tRNA(His) + AMP + diphosphate + H(+). The protein is Histidine--tRNA ligase (hisS) of Helicobacter pylori (strain J99 / ATCC 700824) (Campylobacter pylori J99).